Consider the following 512-residue polypeptide: MEALPTYLESFWHSGGGTMGISILVMLSTFLALGTIFVYRIWLHPLSGFPGPKCCSVSSIPVAWAQLRGRNHEFVSSLHRKYGSVVRISPSELSFISGAAWNDIYSRSKGRPALERDRTFFNDMLVDPETITMANEATHSRIRRAMAPAFSPRALLEQEPIIQANIKLLMDKLEARAGSGGAPTDLRAWFNYTTFDLIGDLAFGESFGCLATSTCHEWVQFVLDHFYTSTLLHVVHRFHPFNRVLAALLPKSLIEKRKAHDSMTLTKVHRRLEVQGRRNDFTQHLLDAAEAGTLSSREVEKQASVLILAGSETTSVALTFAIYLVLTNKPVLDQLNDELHSTFKEEQEINLLSVNQLKYLHAVIQEALRFCPPISNGFPRQTPPQGATVDGMFIPGKTVVNINHWAAYRSPRNFTLPEQFLPERWLGDPRFDEDAKDVFQPFSVGPRNCIGKKFAYDSMKLILAKFLWRFKPTLLDKSRSWLAHQPTFVSFHQPPLLVDLEIKGSDAFPVRE.

A helical transmembrane segment spans residues 19–39; that stretch reads MGISILVMLSTFLALGTIFVY. Asn-191 and Asn-413 each carry an N-linked (GlcNAc...) asparagine glycan. Cys-449 is a binding site for heme.

The protein belongs to the cytochrome P450 family. Heme serves as cofactor.

The protein localises to the membrane. The protein operates within secondary metabolite biosynthesis; terpenoid biosynthesis. Functionally, cytochrome P450 monooxygenase; part of the gene cluster that mediates the biosynthesis of astellolides, drimane-type sesquiterpene esters that show antimicrobial, anti-inflammatory, and anti-tumor activities. The first step in astellolide biosynthesis is performed by the sesquiterpene cyclase astC that catalyzes the formation of drimanyl pyrophosphate from farnesyl pyrophosphate. Drimanyl pyrophosphate is then dephosphorylated by the sesquiterpene phosphatase astI to produce drimanyl monophosphate which is further dephosphorylated to drim-8-ene-11-ol by atsK. Drim-8-ene-11-ol is converted to confertifolin, probably by the cytochrome P450 monooxygenase astD and/or the dehydrogenase astE. The cytochrome P450 monooxygenases astB, astF and astJ then hydroxylate confertifolin at C6, C14, or C15 to form trihydroxy confertifolin. The nonribosomal peptide synthetase astA catalyzes ester bond formation between trihydroxy contifolin and benzoic acid (BA) or 4-hydroxy benzoic acid (4HBA), leading to the formation of dideacetyl astellolides A and B, respectively. Finally, the O-acetyltransferase astG converts dideacetyl astellolides A and B into deacetyl astellolides A and B. The chain is Cytochrome P450 monooxygenase astD from Aspergillus oryzae (strain ATCC 42149 / RIB 40) (Yellow koji mold).